The chain runs to 99 residues: CTP synthase (99 aa).

Residues Thr-1–Lys-99 form the Glutamine amidotransferase type-1 domain. Arg-28 contributes to the L-glutamine binding site. Catalysis depends on residues His-73 and Glu-75.

This sequence belongs to the CTP synthase family. In terms of assembly, homotetramer.

The catalysed reaction is UTP + L-glutamine + ATP + H2O = CTP + L-glutamate + ADP + phosphate + 2 H(+). The enzyme catalyses L-glutamine + H2O = L-glutamate + NH4(+). It carries out the reaction UTP + NH4(+) + ATP = CTP + ADP + phosphate + 2 H(+). It participates in pyrimidine metabolism; CTP biosynthesis via de novo pathway; CTP from UDP: step 2/2. Its activity is regulated as follows. Allosterically activated by GTP, when glutamine is the substrate; GTP has no effect on the reaction when ammonia is the substrate. The allosteric effector GTP functions by stabilizing the protein conformation that binds the tetrahedral intermediate(s) formed during glutamine hydrolysis. Inhibited by the product CTP, via allosteric rather than competitive inhibition. Functionally, catalyzes the ATP-dependent amination of UTP to CTP with either L-glutamine or ammonia as the source of nitrogen. Regulates intracellular CTP levels through interactions with the four ribonucleotide triphosphates. The chain is CTP synthase from Mycoplasma capricolum subsp. capripneumoniae.